The primary structure comprises 165 residues: Phosphopantetheine adenylyltransferase (165 aa).

Thr-9 is a binding site for substrate. ATP contacts are provided by residues 9–10 (TF) and His-17. Positions 41, 78, and 92 each coordinate substrate. Residues 93-95 (GLR), Glu-103, and 128-134 (RQAIASK) contribute to the ATP site.

The protein belongs to the bacterial CoaD family. In terms of assembly, homohexamer. Mg(2+) is required as a cofactor.

Its subcellular location is the cytoplasm. The catalysed reaction is (R)-4'-phosphopantetheine + ATP + H(+) = 3'-dephospho-CoA + diphosphate. The protein operates within cofactor biosynthesis; coenzyme A biosynthesis; CoA from (R)-pantothenate: step 4/5. In terms of biological role, reversibly transfers an adenylyl group from ATP to 4'-phosphopantetheine, yielding dephospho-CoA (dPCoA) and pyrophosphate. The polypeptide is Phosphopantetheine adenylyltransferase (Ruegeria pomeroyi (strain ATCC 700808 / DSM 15171 / DSS-3) (Silicibacter pomeroyi)).